The sequence spans 595 residues: DNA ligase (595 aa).

NAD(+) is bound by residues Asp32–Asp36, Ser81–Leu82, and Glu113. The active-site N6-AMP-lysine intermediate is the Lys115. Arg136, Glu178, Lys296, and Lys320 together coordinate NAD(+). Residues Cys414, Cys417, Cys432, and Cys438 each coordinate Zn(2+).

Belongs to the NAD-dependent DNA ligase family. LigA subfamily. The cofactor is Mg(2+). Mn(2+) is required as a cofactor.

The enzyme catalyses NAD(+) + (deoxyribonucleotide)n-3'-hydroxyl + 5'-phospho-(deoxyribonucleotide)m = (deoxyribonucleotide)n+m + AMP + beta-nicotinamide D-nucleotide.. Its function is as follows. DNA ligase that catalyzes the formation of phosphodiester linkages between 5'-phosphoryl and 3'-hydroxyl groups in double-stranded DNA using NAD as a coenzyme and as the energy source for the reaction. It is essential for DNA replication and repair of damaged DNA. The sequence is that of DNA ligase from Blochmanniella pennsylvanica (strain BPEN).